We begin with the raw amino-acid sequence, 162 residues long: RNA pyrophosphohydrolase (162 aa).

A Nudix hydrolase domain is found at 7 to 149 (KYRPCVGIML…KKEVYKTVIE (143 aa)). The Nudix box signature appears at 40 to 61 (GGVDDGEELEQAALRELLEEVG).

Belongs to the Nudix hydrolase family. RppH subfamily. The cofactor is a divalent metal cation.

Accelerates the degradation of transcripts by removing pyrophosphate from the 5'-end of triphosphorylated RNA, leading to a more labile monophosphorylated state that can stimulate subsequent ribonuclease cleavage. The sequence is that of RNA pyrophosphohydrolase from Wolbachia pipientis wMel.